The primary structure comprises 1686 residues: A disintegrin and metalloproteinase with thrombospondin motifs 7 (1686 aa).

Residues 1 to 27 (MPGGPSPRSPAPLLRPLLLLLCALAPG) form the signal peptide. A propeptide spanning residues 28-236 (APGPAPGRAT…RPRLRRLHQR (209 aa)) is cleaved from the precursor. A glycan (N-linked (GlcNAc...) asparagine) is linked at Asn-94. The Cysteine switch signature appears at 202-209 (STCGVQVY). Cys-204 is a binding site for Zn(2+). A Peptidase M12B domain is found at 242-452 (KWVETLVVAD…GWGLCLDDPP (211 aa)). 11 disulfide bridges follow: Cys-318-Cys-372, Cys-347-Cys-354, Cys-366-Cys-447, Cys-405-Cys-431, Cys-474-Cys-497, Cys-485-Cys-503, Cys-492-Cys-522, Cys-516-Cys-527, Cys-550-Cys-587, Cys-554-Cys-592, and Cys-565-Cys-577. Zn(2+) is bound at residue His-388. Glu-389 is a catalytic residue. 2 residues coordinate Zn(2+): His-392 and His-398. The Disintegrin domain maps to 462–537 (VPPGVLYDVS…VPVGFRPEAV (76 aa)). The TSP type-1 1 domain maps to 538 to 593 (DGGWSGWSAWSICSRSCGMGVQSAERQCTQPTPKYKGRYCVGERKRFRLCNLQACP). Asn-693 and Asn-778 each carry an N-linked (GlcNAc...) asparagine glycan. The interval 698–809 (HTVSGTFEEA…PGVHYEYTIH (112 aa)) is spacer. TSP type-1 domains lie at 821–880 (PVFS…QPCP), 881–940 (ARWW…NRHV), and 942–995 (CPAT…PLCR). Disordered regions lie at residues 1024-1043 (HHLA…TMGN), 1080-1257 (PSEE…SPDV), and 1344-1396 (LGHM…PLAP). The segment covering 1182–1205 (DGLQTPATPESQNDFPVGKDSQSQ) has biased composition (polar residues). The span at 1210–1226 (WRDRTNEVFKDDEEPKG) shows a compositional bias: basic and acidic residues. Residues 1360-1375 (PESLSPEVPLSSRLLS) show a composition bias toward low complexity. 4 consecutive TSP type-1 domains span residues 1411 to 1459 (RNAG…RRCH), 1462 to 1522 (PCAT…QPCL), 1523 to 1567 (SWYT…PCNT), and 1569 to 1629 (PCTQ…EDCE). The region spanning 1632–1672 (EPPRCERDRLSFGFCETLRLLGRCQLPTIRTQCCRSCSPPS) is the PLAC domain. Residues 1666-1686 (RSCSPPSHGAPSRGHQRVARR) form a disordered region.

Interacts with COMP. Zn(2+) serves as cofactor. N-glycosylated. Can be O-fucosylated by POFUT2 on a serine or a threonine residue found within the consensus sequence C1-X(2)-(S/T)-C2-G of the TSP type-1 repeat domains where C1 and C2 are the first and second cysteine residue of the repeat, respectively. Fucosylated repeats can then be further glycosylated by the addition of a beta-1,3-glucose residue by the glucosyltransferase, B3GALTL. Fucosylation mediates the efficient secretion of ADAMTS family members. Can also be C-glycosylated with one or two mannose molecules on tryptophan residues within the consensus sequence W-X-X-W of the TPRs. N- and C-glycosylations can also facilitate secretion. Post-translationally, O-glycosylated proteoglycan; contains chondroitin sulfate. In terms of processing, may be cleaved by a furin endopeptidase. The precursor is sequentially processed. In terms of tissue distribution, expressed in heart, brain, placenta, lung, liver, skeletal muscle, kidney and pancreas. Detected in meniscus, bone, tendon, cartilage, synovium, fat and ligaments.

Its subcellular location is the secreted. It localises to the extracellular space. The protein localises to the extracellular matrix. Metalloprotease. Was previously shown to degrade COMP. However, a later study found no activity against COMP. The chain is A disintegrin and metalloproteinase with thrombospondin motifs 7 (ADAMTS7) from Homo sapiens (Human).